A 668-amino-acid polypeptide reads, in one-letter code: Packaging protein UL32 homolog (668 aa).

Over residues 1 to 10 (MNPSTHVSSN) the composition is skewed to polar residues. Residues 1 to 35 (MNPSTHVSSNGPTTPPHGPHTTFLPPTSPAPSTSS) form a disordered region. The segment covering 19–35 (PHTTFLPPTSPAPSTSS) has biased composition (low complexity). Zn(2+) contacts are provided by C200, C203, H276, and C282. Residues 200 to 282 (CNLCAIISIC…FHLHFFINRC (83 aa)) are zinc finger 1. The disordered stretch occupies residues 401–430 (IEEEEDEEGGEKGGDDPGRHNGGGTSGGFS). Positions 410 to 419 (GEKGGDDPGR) are enriched in basic and acidic residues. C459, C462, H567, and C574 together coordinate Zn(2+). Positions 459-574 (CLLCELMACS…YKHFFCDPQC (116 aa)) are zinc finger 2.

It belongs to the herpesviridae UL32 protein family.

The protein localises to the host cytoplasm. It localises to the host nucleus. Plays a role in efficient localization of neo-synthesized capsids to nuclear replication compartments, thereby controlling cleavage and packaging of virus genomic DNA. The sequence is that of Packaging protein UL32 homolog (UL52) from Homo sapiens (Human).